The chain runs to 800 residues: Chondroitin sulfate synthase 1 (800 aa).

Over 1–7 (MAARGRR) the chain is Cytoplasmic. A helical; Signal-anchor for type II membrane protein membrane pass occupies residues 8 to 28 (AWLSMLLGLVLGFVLASRLVL). Residues 29-800 (PRASELKRVG…GGSHGSARTA (772 aa)) are Lumenal-facing. The disordered stretch occupies residues 36–66 (RVGPRRRPSPEGCRPGQEASQPGGARGDARG). 2 N-linked (GlcNAc...) asparagine glycosylation sites follow: Asn-188 and Asn-622. A divalent metal cation-binding residues include Asp-632 and His-746.

Belongs to the chondroitin N-acetylgalactosaminyltransferase family. Co(2+) serves as cofactor. Mn(2+) is required as a cofactor. It depends on Cd(2+) as a cofactor.

It localises to the golgi apparatus. The protein resides in the golgi stack membrane. The protein localises to the secreted. The enzyme catalyses 3-O-(beta-D-GlcA-(1-&gt;3)-beta-D-GalNAc-(1-&gt;4)-beta-D-GlcA-(1-&gt;3)-beta-D-Gal-(1-&gt;3)-beta-D-Gal-(1-&gt;4)-beta-D-Xyl)-L-seryl-[protein] + UDP-N-acetyl-alpha-D-galactosamine = 3-O-(beta-D-GalNAc-(1-&gt;4)-beta-D-GlcA-(1-&gt;3)-beta-D-GalNAc-(1-&gt;4)-beta-D-GlcA-(1-&gt;3)-beta-D-Gal-(1-&gt;3)-beta-D-Gal-(1-&gt;4)-beta-D-Xyl)-L-seryl-[protein] + UDP + H(+). It carries out the reaction 3-O-{beta-D-GlcA-(1-&gt;3)-[beta-D-GalNAc-(1-&gt;4)-beta-D-GlcA-(1-&gt;3)](n)-beta-D-GalNAc-(1-&gt;4)-beta-D-GlcA-(1-&gt;3)-beta-D-Gal-(1-&gt;3)-beta-D-Gal-(1-&gt;4)-beta-D-Xyl}-L-seryl-[protein] + UDP-N-acetyl-alpha-D-galactosamine = 3-O-{[beta-D-GalNAc-(1-&gt;4)-beta-D-GlcA-(1-&gt;3)](n+1)-beta-D-GalNAc-(1-&gt;4)-beta-D-GlcA-(1-&gt;3)-beta-D-Gal-(1-&gt;3)-beta-D-Gal-(1-&gt;4)-beta-D-Xyl}-L-seryl-[protein] + UDP + H(+). It catalyses the reaction 3-O-(beta-D-GalNAc-(1-&gt;4)-beta-D-GlcA-(1-&gt;3)-beta-D-Gal-(1-&gt;3)-beta-D-Gal-(1-&gt;4)-beta-D-Xyl)-L-seryl-[protein] + UDP-alpha-D-glucuronate = 3-O-(beta-D-GlcA-(1-&gt;3)-beta-D-GalNAc-(1-&gt;4)-beta-D-GlcA-(1-&gt;3)-beta-D-Gal-(1-&gt;3)-beta-D-Gal-(1-&gt;4)-beta-D-Xyl)-L-seryl-[protein] + UDP + H(+). The catalysed reaction is 3-O-{[beta-D-GalNAc-(1-&gt;4)-beta-D-GlcA-(1-&gt;3)](n)-beta-D-GalNAc-(1-&gt;4)-beta-D-GlcA-(1-&gt;3)-beta-D-Gal-(1-&gt;3)-beta-D-Gal-(1-&gt;4)-beta-D-Xyl}-L-seryl-[protein] + UDP-alpha-D-glucuronate = 3-O-{beta-D-GlcA-(1-&gt;3)-[beta-D-GalNAc-(1-&gt;4)-beta-D-GlcA-(1-&gt;3)](n)-beta-D-GalNAc-(1-&gt;4)-beta-D-GlcA-(1-&gt;3)-beta-D-Gal-(1-&gt;3)-beta-D-Gal-(1-&gt;4)-beta-D-Xyl}-L-seryl-[protein] + UDP + H(+). Its function is as follows. Has both beta-1,3-glucuronic acid and beta-1,4-N-acetylgalactosamine transferase activity. Transfers glucuronic acid (GlcUA) from UDP-GlcUA and N-acetylgalactosamine (GalNAc) from UDP-GalNAc to the non-reducing end of the elongating chondroitin polymer. Involved in the negative control of osteogenesis likely through the modulation of NOTCH signaling. This chain is Chondroitin sulfate synthase 1 (Chsy1), found in Mus musculus (Mouse).